Reading from the N-terminus, the 261-residue chain is Cytochrome c oxidase subunit 3 (261 aa).

The Mitochondrial matrix segment spans residues 1-15 (MTHQTHAYHMVNPSP). A helical transmembrane segment spans residues 16–34 (WPLTGALSALLMTSGLTMW). At 35–40 (FHFNSM) the chain is on the mitochondrial intermembrane side. The helical transmembrane segment at 41-66 (TLLMIGLTTNMLTMYQWWRDVIREST) threads the bilayer. Topologically, residues 67-72 (FQGHHT) are mitochondrial matrix. Residues 73-105 (PAVQKGLRYGMILFIISEVLFFTGFFWAFYHSS) traverse the membrane as a helical segment. The Mitochondrial intermembrane portion of the chain corresponds to 106–128 (LAPTPELGGCWPPTGIHPLNPLE). Residues 129–152 (VPLLNTSVLLASGVSITWAHHSLM) traverse the membrane as a helical segment. At 153-155 (EGD) the chain is on the mitochondrial matrix side. Residues 156–183 (RKHMLQALFITITLGVYFTLLQASEYYE) traverse the membrane as a helical segment. Over 184 to 190 (APFTISD) the chain is Mitochondrial intermembrane. Residues 191-223 (GVYGSTFFVATGFHGLHVIIGSTFLIVCFFRQL) traverse the membrane as a helical segment. At 224–232 (KFHFTSNHH) the chain is on the mitochondrial matrix side. The helical transmembrane segment at 233 to 256 (FGFEAAAWYWHFVDVVWLFLYVSI) threads the bilayer. The Mitochondrial intermembrane segment spans residues 257–261 (YWWGS).

This sequence belongs to the cytochrome c oxidase subunit 3 family. In terms of assembly, component of the cytochrome c oxidase (complex IV, CIV), a multisubunit enzyme composed of 14 subunits. The complex is composed of a catalytic core of 3 subunits MT-CO1, MT-CO2 and MT-CO3, encoded in the mitochondrial DNA, and 11 supernumerary subunits COX4I1 (or COX4I2), COX5A, COX5B, COX6A2 (or COX6A1), COX6B1 (or COX6B2), COX6C, COX7A1 (or COX7A2), COX7B, COX7C, COX8B and NDUFA4, which are encoded in the nuclear genome. The complex exists as a monomer or a dimer and forms supercomplexes (SCs) in the inner mitochondrial membrane with NADH-ubiquinone oxidoreductase (complex I, CI) and ubiquinol-cytochrome c oxidoreductase (cytochrome b-c1 complex, complex III, CIII), resulting in different assemblies (supercomplex SCI(1)III(2)IV(1) and megacomplex MCI(2)III(2)IV(2)).

Its subcellular location is the mitochondrion inner membrane. It catalyses the reaction 4 Fe(II)-[cytochrome c] + O2 + 8 H(+)(in) = 4 Fe(III)-[cytochrome c] + 2 H2O + 4 H(+)(out). Its function is as follows. Component of the cytochrome c oxidase, the last enzyme in the mitochondrial electron transport chain which drives oxidative phosphorylation. The respiratory chain contains 3 multisubunit complexes succinate dehydrogenase (complex II, CII), ubiquinol-cytochrome c oxidoreductase (cytochrome b-c1 complex, complex III, CIII) and cytochrome c oxidase (complex IV, CIV), that cooperate to transfer electrons derived from NADH and succinate to molecular oxygen, creating an electrochemical gradient over the inner membrane that drives transmembrane transport and the ATP synthase. Cytochrome c oxidase is the component of the respiratory chain that catalyzes the reduction of oxygen to water. Electrons originating from reduced cytochrome c in the intermembrane space (IMS) are transferred via the dinuclear copper A center (CU(A)) of subunit 2 and heme A of subunit 1 to the active site in subunit 1, a binuclear center (BNC) formed by heme A3 and copper B (CU(B)). The BNC reduces molecular oxygen to 2 water molecules using 4 electrons from cytochrome c in the IMS and 4 protons from the mitochondrial matrix. The chain is Cytochrome c oxidase subunit 3 (MT-CO3) from Bos taurus (Bovine).